Consider the following 547-residue polypeptide: 4-coumarate-CoA ligase 1 (547 aa).

ATP is bound by residues Ser190 to Thr194, His238, Ala310 to Pro312, Gln332 to Gly333, Thr337, Asp421, Arg436, and Lys527. An SBD1 region spans residues Glu263–Gln332. The SBD2 stretch occupies residues Gly333–Tyr400.

The protein belongs to the ATP-dependent AMP-binding enzyme family. As to expression, mostly expressed in stems, and, to a lower extent, in bulbs.

The catalysed reaction is (E)-4-coumarate + ATP + CoA = (E)-4-coumaroyl-CoA + AMP + diphosphate. The protein operates within phytoalexin biosynthesis; 3,4',5-trihydroxystilbene biosynthesis; 3,4',5-trihydroxystilbene from trans-4-coumarate: step 1/2. Produces CoA thioesters of a variety of hydroxy- and methoxy-substituted cinnamic acids, which are used to synthesize several phenylpropanoid-derived compounds, including anthocyanins, flavonoids, isoflavonoids, coumarins, lignin, suberin and wall-bound phenolics. The protein is 4-coumarate-CoA ligase 1 of Narcissus pseudonarcissus (Daffodil).